The primary structure comprises 209 residues: ATP-dependent Clp protease proteolytic subunit (209 aa).

Serine 106 serves as the catalytic Nucleophile. Histidine 131 is a catalytic residue.

It belongs to the peptidase S14 family. In terms of assembly, fourteen ClpP subunits assemble into 2 heptameric rings which stack back to back to give a disk-like structure with a central cavity, resembling the structure of eukaryotic proteasomes.

The protein localises to the cytoplasm. The catalysed reaction is Hydrolysis of proteins to small peptides in the presence of ATP and magnesium. alpha-casein is the usual test substrate. In the absence of ATP, only oligopeptides shorter than five residues are hydrolyzed (such as succinyl-Leu-Tyr-|-NHMec, and Leu-Tyr-Leu-|-Tyr-Trp, in which cleavage of the -Tyr-|-Leu- and -Tyr-|-Trp bonds also occurs).. In terms of biological role, cleaves peptides in various proteins in a process that requires ATP hydrolysis. Has a chymotrypsin-like activity. Plays a major role in the degradation of misfolded proteins. The chain is ATP-dependent Clp protease proteolytic subunit from Brucella melitensis biotype 2 (strain ATCC 23457).